The sequence spans 3416 residues: Genome polyprotein (3416 aa).

Residues 1-34 (MAKGAVLKGKGGGPPRRVPKETAKKTRQGPGRLP) are disordered. Topologically, residues 1–99 (MAKGAVLKGK…NKRRGKRRST (99 aa)) are cytoplasmic. A propeptide spans 97–117 (RSTTGLLTPILLACLATLVFS) (ER anchor for the capsid protein C, removed in mature form by serine protease NS3). The helical transmembrane segment at 100 to 120 (TGLLTPILLACLATLVFSATV) threads the bilayer. The Extracellular portion of the chain corresponds to 121–243 (RRERTGNMVI…HLTRVEGWVW (123 aa)). An N-linked (GlcNAc...) asparagine; by host glycan is attached at Asn145. The chain crosses the membrane as a helical span at residues 244 to 261 (KNKFLTAAFCAVVWMVTD). Position 262 (Ser262) is a topological domain, cytoplasmic. A helical transmembrane segment spans residues 263-281 (LPTRFIVITVALCLAPTYA). The Extracellular segment spans residues 282-728 (TRCTHLQNRD…HTAFGAAFNT (447 aa)). Cystine bridges form between Cys284/Cys311, Cys341/Cys397, Cys341/Cys402, Cys355/Cys386, Cys373/Cys397, and Cys373/Cys402. The segment at 379 to 392 (DRGWGNHCGLFGKG) is fusion peptide. Residue Asn435 is glycosylated (N-linked (GlcNAc...) asparagine; by host). Disulfide bonds link Cys467-Cys571 and Cys588-Cys619. The chain crosses the membrane as a helical span at residues 729-749 (IFGGVGFLPRILLGVALAWLG). Residues 750 to 756 (LNSRNPT) lie on the Cytoplasmic side of the membrane. Residues 757–777 (LSVGFLITGGLVLTMTLGVGA) form a helical membrane-spanning segment. Residues 778-1134 (DMGCAIDANR…RSMVLADNGA (357 aa)) are Extracellular-facing. 6 cysteine pairs are disulfide-bonded: Cys781–Cys792, Cys832–Cys922, Cys957–Cys1002, Cys1059–Cys1108, Cys1070–Cys1092, and Cys1091–Cys1095. 3 N-linked (GlcNAc...) asparagine; by host glycosylation sites follow: Asn862, Asn985, and Asn1001. A helical transmembrane segment spans residues 1135–1155 (MLSEGGVPGIVAVFVVLELVI). The Lumenal segment spans residues 1156 to 1164 (RRRPTTGSS). The chain crosses the membrane as a helical span at residues 1165–1185 (VVWCGMVVLGLVVTGLVTIEG). Over 1186-1189 (LCRY) the chain is Cytoplasmic. The chain crosses the membrane as a helical span at residues 1190–1210 (VVAVGILMSMELGPEIVALVL). Residues 1211-1235 (LQAVFDMRTGLLVAFAVKRAYTTRE) are Lumenal-facing. The helical transmembrane segment at 1236–1256 (AVATYFLLLVLELGFPEASLS) threads the bilayer. Over 1257–1295 (NIWKWADSLAMGALILQACGQEGRTRVGYLLAAMMTQKD) the chain is Cytoplasmic. Residues 1296–1316 (MVIIHTGLTIFLSAATAMAVW) traverse the membrane as a helical segment. At 1317–1361 (SMIKGQRDQKGLSWATPLAGLLGGEGVGLRLLAFRKLAERRNRRS) the chain is on the lumenal side. Residues 1362–1379 (FSEPLTVVGVMLTVASGM) traverse the membrane as a helical segment. The Cytoplasmic portion of the chain corresponds to 1380 to 1384 (VRHTS). A helical transmembrane segment spans residues 1385–1405 (QEALCALVAGAFLLLMMVLGT). Over 1406–1456 (RKMQLTAEWCGEVEWNPDLVNEGGEVNLKVRQDAMGNLHLTEVEKEERAMA) the chain is Lumenal. The segment at 1412 to 1451 (AEWCGEVEWNPDLVNEGGEVNLKVRQDAMGNLHLTEVEKE) is interacts with and activates NS3 protease. Residues 1457-1477 (LWLLAGLVASAFHWAGILIVL) constitute an intramembrane region (helical). Residues 1478–2162 (AVWTLFEMLG…RMAERDAPEA (685 aa)) are Lumenal-facing. In terms of domain architecture, Peptidase S7 spans 1492–1671 (SELVFSGQET…EAEKSRPEIP (180 aa)). Residues His1545, Asp1569, and Ser1629 each act as charge relay system; for serine protease NS3 activity in the active site. A Helicase ATP-binding domain is found at 1677 to 1833 (TGWMSKGQIT…ESNGAIMSEE (157 aa)). Residue 1690–1697 (MHPGSGKT) participates in ATP binding. The DEAH box motif lies at 1781 to 1784 (DEAH). Residues 1844–2002 (GFDWITEYEG…TLRGPVATFY (159 aa)) enclose the Helicase C-terminal domain. Lys1885 is subject to N6-acetyllysine; by host. A helical membrane pass occupies residues 2163–2183 (FLTIVEVAVLGVATLGILWCF). At 2184 to 2191 (VARASVSR) the chain is on the cytoplasmic side. The helical intramembrane region spans 2192-2211 (MFLGTVVLFAALFLLWIGGV). Residue Asp2212 is a topological domain, lumenal. Residues 2213–2233 (YGHMAGIALIFYTLLTVLQPE) traverse the membrane as a helical segment. Residues 2234 to 2246 (PGKQRSSDDNRLA) are Cytoplasmic-facing. The chain crosses the membrane as a helical span at residues 2247-2267 (YFLLGLFSLAGLVTANEMGML). The Lumenal segment spans residues 2268-2301 (DKTKADLAGLVWRGEQRHPAWEEWTNVDIQPARS). The helical intramembrane region spans 2302–2322 (WGTYVLIVSLFTPYMLHQLQT). Residues 2323–2345 (KIQQLVNSSVASGAQAMRDLGGG) lie on the Lumenal side of the membrane. The segment at residues 2346 to 2366 (TPFFGVAGHVIALGVTSLVGA) is an intramembrane region (helical). The Lumenal segment spans residues 2367 to 2368 (TP). The helical transmembrane segment at 2369 to 2389 (MSLGLGVALAAFHLAIVASGL) threads the bilayer. Over 2390-2432 (EAELTQRAHRVFFSAMVKNPMVDGDVINPFPDGETKPALYERR) the chain is Cytoplasmic. The chain crosses the membrane as a helical span at residues 2433-2453 (MSLILAIALCMGSVVLNRTAA). Topologically, residues 2454 to 2476 (SMTEAGAVGLAALGQLVHPETET) are lumenal. A helical transmembrane segment spans residues 2477 to 2497 (LWTMPMACGMAGLVRGSFWGL). At 2498–3416 (LPMGHRLWLR…WDLKLESNII (919 aa)) the chain is on the cytoplasmic side. The mRNA cap 0-1 NS5-type MT domain occupies 2514 to 2778 (GGAEGETLGD…EVDLGTGTRC (265 aa)). Ser2569 is an S-adenosyl-L-methionine binding site. Phosphoserine is present on Ser2569. Lys2574 functions as the For 2'-O-MTase activity in the catalytic mechanism. Residues Gly2599, Trp2600, Thr2617, Ile2618, Asp2644, and Val2645 each contribute to the S-adenosyl-L-methionine site. Asp2659 (for 2'-O-MTase activity) is an active-site residue. Ile2660 contributes to the S-adenosyl-L-methionine binding site. Residues Lys2696 and Glu2732 each act as for 2'-O-MTase activity in the active site. Positions 2732-2736 (EMYFS) are interaction with host SCRIB. Tyr2734 provides a ligand contact to S-adenosyl-L-methionine. Zn(2+) contacts are provided by Glu2952, His2956, Cys2961, and Cys2964. A RdRp catalytic domain is found at 3042–3191 (GLFYADDTAG…RPIDDRFGKA (150 aa)). His3226, Cys3242, and Cys3361 together coordinate Zn(2+).

This sequence in the N-terminal section; belongs to the class I-like SAM-binding methyltransferase superfamily. mRNA cap 0-1 NS5-type methyltransferase family. As to quaternary structure, homodimer. Interacts (via N-terminus) with host EXOC1 (via C-terminus); this interaction results in EXOC1 degradation through the proteasome degradation pathway. In terms of assembly, forms heterodimers with envelope protein E in the endoplasmic reticulum and Golgi. Homodimer; in the endoplasmic reticulum and Golgi. Interacts with protein prM. Interacts with non-structural protein 1. As to quaternary structure, homodimer; Homohexamer when secreted. Interacts with envelope protein E. NS1 interacts with NS4B. Interacts with host complement protein CFH; this interaction leads to the degradation of C3. In terms of assembly, interacts (via N-terminus) with serine protease NS3. Forms a heterodimer with serine protease NS3. May form homooligomers. As to quaternary structure, forms a heterodimer with NS2B. Interacts with non-structural protein 2A (via N-terminus). Interacts with NS4B. Interacts with unphosphorylated RNA-directed RNA polymerase NS5; this interaction stimulates RNA-directed RNA polymerase NS5 guanylyltransferase activity. In terms of assembly, interacts with serine protease NS3. Homodimer. Interacts with host STAT2; this interaction inhibits the phosphorylation of the latter, and, when all viral proteins are present (polyprotein), targets STAT2 for degradation. Interacts with serine protease NS3. Specific enzymatic cleavages in vivo yield mature proteins. Cleavages in the lumen of endoplasmic reticulum are performed by host signal peptidase, whereas cleavages in the cytoplasmic side are performed by serine protease NS3. Signal cleavage at the 2K-4B site requires a prior NS3 protease-mediated cleavage at the 4A-2K site. Post-translationally, cleaved in post-Golgi vesicles by a host furin, releasing the mature small envelope protein M, and peptide pr. This cleavage is incomplete as up to 30% of viral particles still carry uncleaved prM. In terms of processing, N-glycosylated. N-glycosylated. The excreted form is glycosylated and this is required for efficient secretion of the protein from infected cells. Post-translationally, acetylated by host KAT5. Acetylation modulates NS3 RNA-binding and unwinding activities and plays an important positive role for viral replication. In terms of processing, phosphorylated on serines residues. This phosphorylation may trigger NS5 nuclear localization.

It is found in the virion. The protein resides in the host nucleus. Its subcellular location is the host cytoplasm. The protein localises to the host perinuclear region. It localises to the secreted. It is found in the virion membrane. The protein resides in the host endoplasmic reticulum membrane. The catalysed reaction is Selective hydrolysis of -Xaa-Xaa-|-Yaa- bonds in which each of the Xaa can be either Arg or Lys and Yaa can be either Ser or Ala.. It catalyses the reaction RNA(n) + a ribonucleoside 5'-triphosphate = RNA(n+1) + diphosphate. The enzyme catalyses a ribonucleoside 5'-triphosphate + H2O = a ribonucleoside 5'-diphosphate + phosphate + H(+). It carries out the reaction ATP + H2O = ADP + phosphate + H(+). The catalysed reaction is a 5'-end (5'-triphosphoguanosine)-ribonucleoside in mRNA + S-adenosyl-L-methionine = a 5'-end (N(7)-methyl 5'-triphosphoguanosine)-ribonucleoside in mRNA + S-adenosyl-L-homocysteine. It catalyses the reaction a 5'-end (N(7)-methyl 5'-triphosphoguanosine)-ribonucleoside in mRNA + S-adenosyl-L-methionine = a 5'-end (N(7)-methyl 5'-triphosphoguanosine)-(2'-O-methyl-ribonucleoside) in mRNA + S-adenosyl-L-homocysteine + H(+). In terms of biological role, plays a role in virus budding by binding to the cell membrane and gathering the viral RNA into a nucleocapsid that forms the core of a mature virus particle. During virus entry, may induce genome penetration into the host cytoplasm after hemifusion induced by the surface proteins. Can migrate to the cell nucleus where it modulates host functions. Its function is as follows. Inhibits RNA silencing by interfering with host Dicer. Functionally, prevents premature fusion activity of envelope proteins in trans-Golgi by binding to envelope protein E at pH6.0. After virion release in extracellular space, gets dissociated from E dimers. Acts as a chaperone for envelope protein E during intracellular virion assembly by masking and inactivating envelope protein E fusion peptide. prM is the only viral peptide matured by host furin in the trans-Golgi network probably to avoid catastrophic activation of the viral fusion activity in acidic Golgi compartment prior to virion release. prM-E cleavage is inefficient, and many virions are only partially matured. These uncleaved prM would play a role in immune evasion. In terms of biological role, may play a role in virus budding. Exerts cytotoxic effects by activating a mitochondrial apoptotic pathway through M ectodomain. May display a viroporin activity. Its function is as follows. Binds to host cell surface receptor and mediates fusion between viral and cellular membranes. Envelope protein is synthesized in the endoplasmic reticulum in the form of heterodimer with protein prM. They play a role in virion budding in the ER, and the newly formed immature particle is covered with 60 spikes composed of heterodimer between precursor prM and envelope protein E. The virion is transported to the Golgi apparatus where the low pH causes dissociation of PrM-E heterodimers and formation of E homodimers. prM-E cleavage is inefficient, and many virions are only partially matured. These uncleaved prM would play a role in immune evasion. Functionally, involved in immune evasion, pathogenesis and viral replication. Once cleaved off the polyprotein, is targeted to three destinations: the viral replication cycle, the plasma membrane and the extracellular compartment. Essential for viral replication. Required for formation of the replication complex and recruitment of other non-structural proteins to the ER-derived membrane structures. Excreted as a hexameric lipoparticle that plays a role against host immune response. Antagonizing the complement function. Binds to the host macrophages and dendritic cells. Inhibits signal transduction originating from Toll-like receptor 3 (TLR3). Component of the viral RNA replication complex that functions in virion assembly and antagonizes the host immune response. In terms of biological role, required cofactor for the serine protease function of NS3. May have membrane-destabilizing activity and form viroporins. Its function is as follows. Displays three enzymatic activities: serine protease, NTPase and RNA helicase. NS3 serine protease, in association with NS2B, performs its autocleavage and cleaves the polyprotein at dibasic sites in the cytoplasm: C-prM, NS2A-NS2B, NS2B-NS3, NS3-NS4A, NS4A-2K and NS4B-NS5. NS3 RNA helicase binds RNA and unwinds dsRNA in the 3' to 5' direction. Functionally, regulates the ATPase activity of the NS3 helicase activity. NS4A allows NS3 helicase to conserve energy during unwinding. Functions as a signal peptide for NS4B and is required for the interferon antagonism activity of the latter. In terms of biological role, induces the formation of ER-derived membrane vesicles where the viral replication takes place. Inhibits interferon (IFN)-induced host STAT1 phosphorylation and nuclear translocation, thereby preventing the establishment of cellular antiviral state by blocking the IFN-alpha/beta pathway. Inhibits STAT2 translocation in the nucleus after IFN-alpha treatment. Its function is as follows. Replicates the viral (+) and (-) RNA genome, and performs the capping of genomes in the cytoplasm. NS5 methylates viral RNA cap at guanine N-7 and ribose 2'-O positions. Besides its role in RNA genome replication, also prevents the establishment of cellular antiviral state by blocking the interferon-alpha/beta (IFN-alpha/beta) signaling pathway. Inhibits host TYK2 and STAT2 phosphorylation, thereby preventing activation of JAK-STAT signaling pathway. This is Genome polyprotein from Homo sapiens (Human).